A 213-amino-acid polypeptide reads, in one-letter code: Glycerol-3-phosphate acyltransferase (213 aa).

The next 5 helical transmembrane spans lie at 3-23 (LLLF…LWIG), 68-88 (ILLP…GFFA), 112-132 (VLLG…VLVL), 134-154 (LFSM…LSVL), and 163-183 (LPNY…IIII).

Belongs to the PlsY family. In terms of assembly, probably interacts with PlsX.

The protein resides in the cell membrane. The enzyme catalyses an acyl phosphate + sn-glycerol 3-phosphate = a 1-acyl-sn-glycero-3-phosphate + phosphate. It participates in lipid metabolism; phospholipid metabolism. Catalyzes the transfer of an acyl group from acyl-phosphate (acyl-PO(4)) to glycerol-3-phosphate (G3P) to form lysophosphatidic acid (LPA). This enzyme utilizes acyl-phosphate as fatty acyl donor, but not acyl-CoA or acyl-ACP. The protein is Glycerol-3-phosphate acyltransferase of Streptococcus pyogenes serotype M28 (strain MGAS6180).